A 45-amino-acid chain; its full sequence is Photosystem II reaction center protein K (45 aa).

A propeptide spanning residues 1–8 is cleaved from the precursor; that stretch reads MNSALFLA. The helical transmembrane segment at 23 to 43 threads the bilayer; sequence ILPVIPVFFLLLAFVWQAAIG.

This sequence belongs to the PsbK family. In terms of assembly, PSII is composed of 1 copy each of membrane proteins PsbA, PsbB, PsbC, PsbD, PsbE, PsbF, PsbH, PsbI, PsbJ, PsbK, PsbL, PsbM, PsbT, PsbX, PsbY, PsbZ, Psb30/Ycf12, at least 3 peripheral proteins of the oxygen-evolving complex and a large number of cofactors. It forms dimeric complexes.

The protein localises to the plastid. It is found in the chloroplast thylakoid membrane. Functionally, one of the components of the core complex of photosystem II (PSII). PSII is a light-driven water:plastoquinone oxidoreductase that uses light energy to abstract electrons from H(2)O, generating O(2) and a proton gradient subsequently used for ATP formation. It consists of a core antenna complex that captures photons, and an electron transfer chain that converts photonic excitation into a charge separation. In Porphyra purpurea (Red seaweed), this protein is Photosystem II reaction center protein K.